The chain runs to 82 residues: Sec-independent protein translocase protein TatA (82 aa).

Residues 1–21 form a helical membrane-spanning segment; the sequence is MGSFSIWHWLIVLLIVVMVFG. The segment at 46–82 is disordered; that stretch reads GASTDDSATTSAPAGQVTNNSAAADKTTIDVEAKHKS. Polar residues predominate over residues 49 to 67; it reads TDDSATTSAPAGQVTNNSA. The segment covering 72 to 82 has biased composition (basic and acidic residues); sequence TTIDVEAKHKS.

It belongs to the TatA/E family. As to quaternary structure, the Tat system comprises two distinct complexes: a TatABC complex, containing multiple copies of TatA, TatB and TatC subunits, and a separate TatA complex, containing only TatA subunits. Substrates initially bind to the TatABC complex, which probably triggers association of the separate TatA complex to form the active translocon.

The protein resides in the cell inner membrane. Part of the twin-arginine translocation (Tat) system that transports large folded proteins containing a characteristic twin-arginine motif in their signal peptide across membranes. TatA could form the protein-conducting channel of the Tat system. The polypeptide is Sec-independent protein translocase protein TatA (Acidovorax ebreus (strain TPSY) (Diaphorobacter sp. (strain TPSY))).